A 213-amino-acid polypeptide reads, in one-letter code: Probable transaldolase (213 aa).

Residue lysine 83 is the Schiff-base intermediate with substrate of the active site.

This sequence belongs to the transaldolase family. Type 3B subfamily.

It localises to the cytoplasm. It catalyses the reaction D-sedoheptulose 7-phosphate + D-glyceraldehyde 3-phosphate = D-erythrose 4-phosphate + beta-D-fructose 6-phosphate. Its pathway is carbohydrate degradation; pentose phosphate pathway; D-glyceraldehyde 3-phosphate and beta-D-fructose 6-phosphate from D-ribose 5-phosphate and D-xylulose 5-phosphate (non-oxidative stage): step 2/3. Transaldolase is important for the balance of metabolites in the pentose-phosphate pathway. In Syntrophomonas wolfei subsp. wolfei (strain DSM 2245B / Goettingen), this protein is Probable transaldolase.